The primary structure comprises 199 residues: Small ribosomal subunit protein uS4 (199 aa).

The 64-residue stretch at 94–157 folds into the S4 RNA-binding domain; that stretch reads SRLDNLVYRA…RKLKLVQEAL (64 aa).

Belongs to the universal ribosomal protein uS4 family. As to quaternary structure, part of the 30S ribosomal subunit. Contacts protein S5. The interaction surface between S4 and S5 is involved in control of translational fidelity.

Functionally, one of the primary rRNA binding proteins, it binds directly to 16S rRNA where it nucleates assembly of the body of the 30S subunit. Its function is as follows. With S5 and S12 plays an important role in translational accuracy. The polypeptide is Small ribosomal subunit protein uS4 (Mycoplasmopsis synoviae (strain 53) (Mycoplasma synoviae)).